Reading from the N-terminus, the 342-residue chain is Ribosomal RNA small subunit methyltransferase C (342 aa).

It belongs to the methyltransferase superfamily. RsmC family. In terms of assembly, monomer.

It is found in the cytoplasm. The catalysed reaction is guanosine(1207) in 16S rRNA + S-adenosyl-L-methionine = N(2)-methylguanosine(1207) in 16S rRNA + S-adenosyl-L-homocysteine + H(+). Functionally, specifically methylates the guanine in position 1207 of 16S rRNA in the 30S particle. The polypeptide is Ribosomal RNA small subunit methyltransferase C (Salmonella newport (strain SL254)).